Consider the following 476-residue polypeptide: Carbamoyl phosphate synthase arginine-specific small chain (476 aa).

The N-terminal 24 residues, 1-24 (MFSHLLKPAARSAGLLGHVNRRYL), are a transit peptide targeting the mitochondrion. The region spanning 228–415 (HVALIDCGVK…IQNVQRYKDH (188 aa)) is the Glutamine amidotransferase type-1 domain. Cysteine 304 acts as the Nucleophile in catalysis. Active-site residues include histidine 388 and glutamate 390.

The protein belongs to the CarA family. Heterodimer composed of 2 chains; the small (or glutamine) chain promotes the hydrolysis of glutamine to ammonia, which is used by the large (or ammonia) chain to synthesize carbamoyl phosphate.

It is found in the mitochondrion matrix. The enzyme catalyses hydrogencarbonate + L-glutamine + 2 ATP + H2O = carbamoyl phosphate + L-glutamate + 2 ADP + phosphate + 2 H(+). The catalysed reaction is L-glutamine + H2O = L-glutamate + NH4(+). It participates in amino-acid biosynthesis; L-arginine biosynthesis; carbamoyl phosphate from bicarbonate: step 1/1. In terms of biological role, small subunit of the arginine-specific carbamoyl phosphate synthase (CPSase). CPSase catalyzes the formation of carbamoyl phosphate from the ammonia moiety of glutamine, carbonate, and phosphate donated by ATP, the first step of the arginine biosynthetic pathway. The small subunit (glutamine amidotransferase) binds and cleaves glutamine to supply the large subunit with the substrate ammonia. The polypeptide is Carbamoyl phosphate synthase arginine-specific small chain (CPA1) (Phaeosphaeria nodorum (strain SN15 / ATCC MYA-4574 / FGSC 10173) (Glume blotch fungus)).